The following is a 256-amino-acid chain: Imidazole glycerol phosphate synthase subunit HisF (256 aa).

Catalysis depends on residues Asp11 and Asp130.

The protein belongs to the HisA/HisF family. In terms of assembly, heterodimer of HisH and HisF.

It is found in the cytoplasm. It catalyses the reaction 5-[(5-phospho-1-deoxy-D-ribulos-1-ylimino)methylamino]-1-(5-phospho-beta-D-ribosyl)imidazole-4-carboxamide + L-glutamine = D-erythro-1-(imidazol-4-yl)glycerol 3-phosphate + 5-amino-1-(5-phospho-beta-D-ribosyl)imidazole-4-carboxamide + L-glutamate + H(+). Its pathway is amino-acid biosynthesis; L-histidine biosynthesis; L-histidine from 5-phospho-alpha-D-ribose 1-diphosphate: step 5/9. Functionally, IGPS catalyzes the conversion of PRFAR and glutamine to IGP, AICAR and glutamate. The HisF subunit catalyzes the cyclization activity that produces IGP and AICAR from PRFAR using the ammonia provided by the HisH subunit. The protein is Imidazole glycerol phosphate synthase subunit HisF of Thioalkalivibrio sulfidiphilus (strain HL-EbGR7).